We begin with the raw amino-acid sequence, 765 residues long: FHF complex subunit HOOK interacting protein 2A (765 aa).

Disordered stretches follow at residues 193–236 (TLKG…DHLS) and 532–561 (TDISPENTLPNQEWLSSSPPATPDHPKNDG). Polar residues-rich tracts occupy residues 196–208 (GQDSLSTDTGQSR) and 535–550 (SPENTLPNQEWLSSSP).

This sequence belongs to the FHIP family. As to expression, expressed in all tissues tested, highly expressed brain. In terms of tissue distribution, only detected at high levels in testis.

Its function is as follows. Required for proper functioning of the nervous system. The polypeptide is FHF complex subunit HOOK interacting protein 2A (Homo sapiens (Human)).